A 126-amino-acid chain; its full sequence is UPF0538 protein C2orf76 (126 aa).

It belongs to the UPF0538 family.

The protein is UPF0538 protein C2orf76 (C2orf76) of Homo sapiens (Human).